A 55-amino-acid polypeptide reads, in one-letter code: ATP synthase small subunit 6, mitochondrial (55 aa).

A mitochondrion-targeting transit peptide spans 1 to 15 (MRQFDPWPVFFRREW). A helical transmembrane segment spans residues 20–39 (PFLVGFAVTGAIITKMSLGF).

Belongs to the ATPase 6 subunit family.

It localises to the mitochondrion inner membrane. In terms of biological role, mitochondrial membrane ATP synthase (F(1)F(0) ATP synthase or Complex V) produces ATP from ADP in the presence of a proton gradient across the membrane which is generated by electron transport complexes of the respiratory chain. F-type ATPases consist of two structural domains, F(1) - containing the extramembraneous catalytic core and F(0) - containing the membrane proton channel, linked together by a central stalk and a peripheral stalk. During catalysis, ATP synthesis in the catalytic domain of F(1) is coupled via a rotary mechanism of the central stalk subunits to proton translocation. Part of the complex F(0) domain. Confers tolerance to several abiotic stresses (e.g. salt, mannitol, drought, oxidative and cold stresses), probably by providing additional energy needed for cell homeostasis. The chain is ATP synthase small subunit 6, mitochondrial from Solanum tuberosum (Potato).